Consider the following 1212-residue polypeptide: Metabotropic glutamate receptor 5 (1212 aa).

Positions 1–20 (MVLLLILSVLLLKEDVRGSA) are cleaved as a signal peptide. The Extracellular portion of the chain corresponds to 22-580 (SSERRVVAHM…QYLRWGDPEP (559 aa)). A disulfide bridge links Cys-57 with Cys-99. L-glutamate is bound at residue Tyr-64. The N-linked (GlcNAc...) asparagine glycan is linked to Asn-88. L-glutamate contacts are provided by residues Ser-152 and 173–175 (SAT). Residue Asn-210 is glycosylated (N-linked (GlcNAc...) asparagine). Tyr-223 is an L-glutamate binding site. Cystine bridges form between Cys-241-Cys-530, Cys-276-Cys-278, Cys-365-Cys-381, Cys-419-Cys-426, Cys-511-Cys-531, Cys-515-Cys-534, Cys-537-Cys-549, and Cys-552-Cys-565. Asp-305 serves as a coordination point for L-glutamate. N-linked (GlcNAc...) asparagine glycosylation is found at Asn-378 and Asn-382. An L-glutamate-binding site is contributed by Lys-396. N-linked (GlcNAc...) asparagine glycosylation occurs at Asn-445. A helical transmembrane segment spans residues 581–603 (IAAVVFACLGLLATLFVTVVFII). Residues 604-613 (YRDTPVVKSS) are Cytoplasmic-facing. A helical membrane pass occupies residues 614–636 (SRELCYIILAGICLGYLCTFCLI). Topologically, residues 637 to 644 (AKPKQIYC) are extracellular. Cys-644 and Cys-733 are joined by a disulfide. The chain crosses the membrane as a helical span at residues 645-667 (YLQRIGIGLSPAMSYSALVTKTN). Over 668 to 693 (RIARILAGSKKKICTKKPRFMSACAQ) the chain is Cytoplasmic. Residues 694-714 (LVIAFILICIQLGIIVALFIM) form a helical membrane-spanning segment. Residues 715 to 737 (EPPDIMHDYPSIREVYLICNTTN) lie on the Extracellular side of the membrane. N-linked (GlcNAc...) asparagine glycosylation occurs at Asn-734. A helical membrane pass occupies residues 738–759 (LGVVTPLGYNGLLILSCTFYAF). The Cytoplasmic portion of the chain corresponds to 760–772 (KTRNVPANFNEAK). A helical transmembrane segment spans residues 773–795 (YIAFTMYTTCIIWLAFVPIYFGS). Residues 796–798 (NYK) are Extracellular-facing. Residues 799–820 (IITMCFSVSLSATVALGCMFVP) form a helical membrane-spanning segment. Over 821-1212 (KVYIILAKPE…RDYTQSSSSL (392 aa)) the chain is Cytoplasmic. Residue Ser-861 is modified to Phosphoserine. Arg-869 and Arg-925 each carry omega-N-methylarginine. 3 disordered regions span residues 937–971 (INKK…GGSA), 1010–1056 (FPAP…SQGS), and 1132–1191 (GAQA…ALCI). The span at 961–971 (LGAGAGAGGSA) shows a compositional bias: gly residues. 2 positions are modified to phosphoserine: Ser-1018 and Ser-1020. The span at 1132-1153 (GAQAAGDAARESPAAGPEAAAA) shows a compositional bias: low complexity. Polar residues predominate over residues 1174-1185 (DSGSTTPNSPVS).

This sequence belongs to the G-protein coupled receptor 3 family. The PPXXF motif binds HOMER1, HOMER2 and HOMER3. Interacts with SIAH1, RYR1, RYR2, ITPR1, SHANK1, SHANK3 and TAMALIN. Interacts with NCDN. Isoform 2 interacts with NECAB2. Interacts with CAMK2A.

It localises to the cell membrane. G-protein coupled receptor for glutamate. Ligand binding causes a conformation change that triggers signaling via guanine nucleotide-binding proteins (G proteins) and modulates the activity of down-stream effectors. Signaling activates a phosphatidylinositol-calcium second messenger system and generates a calcium-activated chloride current. Plays an important role in the regulation of synaptic plasticity and the modulation of the neural network activity. The chain is Metabotropic glutamate receptor 5 (GRM5) from Homo sapiens (Human).